The primary structure comprises 442 residues: 3-ketoacyl-CoA thiolase (442 aa).

The active-site Acyl-thioester intermediate is the cysteine 105. Catalysis depends on proton acceptor residues histidine 398 and cysteine 428.

It belongs to the thiolase-like superfamily. Thiolase family. Heterotetramer of two alpha chains (FadJ) and two beta chains (FadI).

It localises to the cytoplasm. It carries out the reaction an acyl-CoA + acetyl-CoA = a 3-oxoacyl-CoA + CoA. It participates in lipid metabolism; fatty acid beta-oxidation. Catalyzes the final step of fatty acid oxidation in which acetyl-CoA is released and the CoA ester of a fatty acid two carbons shorter is formed. The sequence is that of 3-ketoacyl-CoA thiolase from Aliivibrio fischeri (strain ATCC 700601 / ES114) (Vibrio fischeri).